The chain runs to 880 residues: MVDTKNPGDKTLSVSPSKTLTLKRGVEQGTVRQSFSHGRTKQVVVEKRGKRRVGGDGPADAPAAPAPVAAAKPAPVRAPMSRPPQSSHRGGGSGVVLRTLTEDERTARASALADARIRDEEERKAAEAELARRNSKEGIEQAEREAAEARKKAEEERHRQDEEAKRKAELEAKKRFGEEEAKKAAAAAPAKTTAATTATAAKPGAPARAPGVAADATDEDEGPRQIRRGPGGAARPVVAPKPTAKPAPAKQRGRLTLVTALSADDVRERSIASFRRRTQRLKGHQSNEPKEKLVREVIIPEAITIQELANRMAERAVDVIRMLMKQGQMVKITDVIDADTAQLIAEELGHSVKRVAASDVEEGLFDIVDDATDTEPRSPVVTVMGHVDHGKTSLLDALRHANVVSGEAGGITQHIGAYQVTSPESGKKITFIDTPGHAAFTAMRARGAKVTDIVVLVVAADDGVMPQTIEAINHAKAAKVPVIVAINKIDKQDAKPERVRTELLQYGIQVESLGGDVVDVEVSAKNKTNLDKLLEMIALQAELLDLKTNTERPAEGTVIEAKLDRGRGPVATVLVQRGTLRVGDIIVAGAEMGRVRALISDQGVTLTEAGPSVPVEVLGFNGPPEAGDRMAVVDSEARARQVTSYRAHQKREKSASAVSGLRGSLEQMMSQLKTTGRKDFPLIIKADVAGSLEAILGSLEKLGTDEVTARILHAGVGGISESDVTLAEGFNAAIIGFNVRAHKEAAAAAKRNGIEIRYYNIIYDLVDDVKKAMSGLLAPTLRETMLGNALILEVFNISKVGKVAGCRVTDGSVERGANVRLIRDNVVVHEGKLSTLKRFKDEVKEVQSGQECGMAFENYGDMRAGDIIECYRVETIQRSL.

The segment at 1–251 (MVDTKNPGDK…PTAKPAPAKQ (251 aa)) is disordered. Over residues 58–79 (PADAPAAPAPVAAAKPAPVRAP) the composition is skewed to low complexity. Residues 115 to 183 (ARIRDEEERK…KRFGEEEAKK (69 aa)) show a composition bias toward basic and acidic residues. Composition is skewed to low complexity over residues 184–215 (AAAAAPAKTTAATTATAAKPGAPARAPGVAAD) and 233–250 (AARPVVAPKPTAKPAPAK). Residues 376–547 (PRSPVVTVMG…ALQAELLDLK (172 aa)) enclose the tr-type G domain. The segment at 385–392 (GHVDHGKT) is G1. A GTP-binding site is contributed by 385-392 (GHVDHGKT). The tract at residues 410–414 (GITQH) is G2. The tract at residues 433–436 (DTPG) is G3. Residues 433 to 437 (DTPGH) and 487 to 490 (NKID) contribute to the GTP site. The segment at 487–490 (NKID) is G4. Residues 523–525 (SAK) form a G5 region.

Belongs to the TRAFAC class translation factor GTPase superfamily. Classic translation factor GTPase family. IF-2 subfamily.

Its subcellular location is the cytoplasm. Its function is as follows. One of the essential components for the initiation of protein synthesis. Protects formylmethionyl-tRNA from spontaneous hydrolysis and promotes its binding to the 30S ribosomal subunits. Also involved in the hydrolysis of GTP during the formation of the 70S ribosomal complex. This chain is Translation initiation factor IF-2, found in Rhodopseudomonas palustris (strain BisB18).